Consider the following 524-residue polypeptide: Probable cytochrome P450 519C1 (524 aa).

Residues 1 to 21 (MNILLLIFYFLVCFLIFDFIK) form a helical membrane-spanning segment. A heme-binding site is contributed by C470.

Belongs to the cytochrome P450 family. Heme is required as a cofactor.

Its subcellular location is the membrane. This is Probable cytochrome P450 519C1 (cyp519C1) from Dictyostelium discoideum (Social amoeba).